A 439-amino-acid polypeptide reads, in one-letter code: Cobyrinate a,c-diamide synthase (439 aa).

Residues Glu214 to Asp235 form a disordered region. Residues Arg237–Phe428 enclose the GATase cobBQ-type domain. The Nucleophile role is filled by Cys317.

Belongs to the CobB/CbiA family. It depends on Mg(2+) as a cofactor.

The catalysed reaction is cob(II)yrinate + 2 L-glutamine + 2 ATP + 2 H2O = cob(II)yrinate a,c diamide + 2 L-glutamate + 2 ADP + 2 phosphate + 2 H(+). The protein operates within cofactor biosynthesis; adenosylcobalamin biosynthesis; cob(II)yrinate a,c-diamide from sirohydrochlorin (anaerobic route): step 10/10. Catalyzes the ATP-dependent amidation of the two carboxylate groups at positions a and c of cobyrinate, using either L-glutamine or ammonia as the nitrogen source. This chain is Cobyrinate a,c-diamide synthase, found in Haloarcula marismortui (strain ATCC 43049 / DSM 3752 / JCM 8966 / VKM B-1809) (Halobacterium marismortui).